The sequence spans 94 residues: Small ribosomal subunit protein uS19 (94 aa).

Belongs to the universal ribosomal protein uS19 family.

In terms of biological role, protein S19 forms a complex with S13 that binds strongly to the 16S ribosomal RNA. This chain is Small ribosomal subunit protein uS19 (rpsS), found in Lactobacillus acidophilus (strain ATCC 700396 / NCK56 / N2 / NCFM).